We begin with the raw amino-acid sequence, 168 residues long: Protein-export protein SecB (168 aa).

Residues 1 to 10 (MSDQGTNNGE) show a composition bias toward polar residues. The tract at residues 1-22 (MSDQGTNNGESGNGGAQNGEAP) is disordered.

Belongs to the SecB family. In terms of assembly, homotetramer, a dimer of dimers. One homotetramer interacts with 1 SecA dimer.

It is found in the cytoplasm. Functionally, one of the proteins required for the normal export of preproteins out of the cell cytoplasm. It is a molecular chaperone that binds to a subset of precursor proteins, maintaining them in a translocation-competent state. It also specifically binds to its receptor SecA. The chain is Protein-export protein SecB from Parvibaculum lavamentivorans (strain DS-1 / DSM 13023 / NCIMB 13966).